The following is an 843-amino-acid chain: MTNSRRHIFERICAKAFQSSLTCSIFGFTVLLILYLLDWKRIAQVPGPNLLKDLEFQRAWNDLEYISSLPHPYNSKQNEHVRSYILKSMRELEATNQSYITVIDDTLTNITFESTDNDTLTYFEGDNILVKFEGKSKDLFPILLSAHFDSVSTGYGATDDGMGVATVMAIARYYAKNQPNRDLIININNAEEDYLFGAKAFASHKLSKNVTAFVNLEGAGSGGKAMLFRSSNGHVSSAYFKGNHYPLASILGNDFFKRGVIRSQTDYIVYEKMHNHTAGLDIAFYENRDIYHTRKDDINHLMPSSLRHMMYTASNAVKNLLNDSKSDLTKFRKPMFFLAFGKYWQLNLPIYQVLNIIFAVICPIVLLLTLIRFPSLYEQLKKPRYTVCFVVSCIFVSIFDTLTVLLLTWINPYVINSHTGLILALFYLTNLIALAFSFRAAATHSKLSSEDLSSIEIVFIWYAQILWYLVFIVSVILSIYFQLGSTYWVTLSYLCTFTCCIMTIIRINYFVDNVVTTQTTHEEDALIGSSINTSSHQHYGSTLNSTPHRRNSIALSNRAHVKLIDNIWTVIYFIFNVPFPVFLCYDILVETILPAGSQTLTDSVFSSKLYKLVIFVVFLSLVNSGPFIFRALSKKSLAVLTMLWITLFVQALSVNPFTESAPLKLSFVQMYDMDRMNNTVYVKNISPFTQDVLSLNPHFLFSNGSCNTSLCYYESTDPDFGGLKTPMSIHIEREKHQLDISINSGSKWCYVDFNTSVFFEAINGNSISGMYSSVRMGQRSFYAPYTLNLTITEVVKAEVTCLYDDIHEGIIPAYNTFVEHLPSWVAGVKASTGLLKVKSSIVI.

Residues 1-16 (MTNSRRHIFERICAKA) are Cytoplasmic-facing. A helical transmembrane segment spans residues 17–37 (FQSSLTCSIFGFTVLLILYLL). Residues 38-347 (DWKRIAQVPG…LAFGKYWQLN (310 aa)) lie on the Vacuolar side of the membrane. Residues Asn-96, Asn-109, and Asn-117 are each glycosylated (N-linked (GlcNAc...) asparagine). Zn(2+)-binding residues include His-147 and Asp-159. Glu-191 functions as the Proton acceptor in the catalytic mechanism. Zn(2+) is bound at residue Glu-192. N-linked (GlcNAc...) asparagine glycosylation is present at Asn-209. Glu-217 lines the Zn(2+) pocket. N-linked (GlcNAc...) asparagine glycosylation occurs at Asn-275. His-292 is a Zn(2+) binding site. Asn-322 is a glycosylation site (N-linked (GlcNAc...) asparagine). The chain crosses the membrane as a helical span at residues 348–368 (LPIYQVLNIIFAVICPIVLLL). The Cytoplasmic portion of the chain corresponds to 369–386 (TLIRFPSLYEQLKKPRYT). A helical membrane pass occupies residues 387–407 (VCFVVSCIFVSIFDTLTVLLL). At 408–417 (TWINPYVINS) the chain is on the vacuolar side. A helical membrane pass occupies residues 418–438 (HTGLILALFYLTNLIALAFSF). At 439-456 (RAAATHSKLSSEDLSSIE) the chain is on the cytoplasmic side. A helical membrane pass occupies residues 457–477 (IVFIWYAQILWYLVFIVSVIL). The Vacuolar portion of the chain corresponds to 478-484 (SIYFQLG). A helical transmembrane segment spans residues 485–505 (STYWVTLSYLCTFTCCIMTII). Over 506–566 (RINYFVDNVV…NRAHVKLIDN (61 aa)) the chain is Cytoplasmic. The chain crosses the membrane as a helical span at residues 567–587 (IWTVIYFIFNVPFPVFLCYDI). Residues 588 to 608 (LVETILPAGSQTLTDSVFSSK) lie on the Vacuolar side of the membrane. A helical membrane pass occupies residues 609-629 (LYKLVIFVVFLSLVNSGPFIF). Residues 630-636 (RALSKKS) are Cytoplasmic-facing. The chain crosses the membrane as a helical span at residues 637-657 (LAVLTMLWITLFVQALSVNPF). The Vacuolar segment spans residues 658-843 (TESAPLKLSF…LLKVKSSIVI (186 aa)). N-linked (GlcNAc...) asparagine glycosylation is found at Asn-677, Asn-703, Asn-707, Asn-754, and Asn-788.

It belongs to the peptidase M28 family. Requires Zn(2+) as cofactor.

It localises to the membrane. The protein localises to the vacuole membrane. May be involved in vacuolar sorting and osmoregulation. This is Vacuolar membrane protease from Schizosaccharomyces pombe (strain 972 / ATCC 24843) (Fission yeast).